The primary structure comprises 642 residues: Sec1 family domain-containing protein 1 (642 aa).

N-acetylalanine is present on A2. A phosphoserine mark is found at S37, S303, and S528.

It belongs to the STXBP/unc-18/SEC1 family. In terms of assembly, interacts with STX17. Interacts with STX5A. Interacts with the COG complex via COG4.

It is found in the cytoplasm. Its subcellular location is the endoplasmic reticulum membrane. It localises to the golgi apparatus. The protein resides in the golgi stack membrane. Plays a role in SNARE-pin assembly and Golgi-to-ER retrograde transport via its interaction with COG4. Involved in vesicular transport between the endoplasmic reticulum and the Golgi. This chain is Sec1 family domain-containing protein 1 (SCFD1), found in Homo sapiens (Human).